Here is a 434-residue protein sequence, read N- to C-terminus: Zinc finger and BTB domain-containing protein 8A (434 aa).

The 69-residue stretch at 24–92 folds into the BTB domain; it reads CDCSILVEGK…VYSGKLSLTG (69 aa). The interval 134–238 is disordered; sequence SLSDKDTGSN…SGNHVSQSEE (105 aa). Ser-161 and Ser-167 each carry phosphoserine. Glycyl lysine isopeptide (Lys-Gly) (interchain with G-Cter in SUMO2) cross-links involve residues Lys-172, Lys-176, and Lys-193. Residues 192–202 are compositionally biased toward basic and acidic residues; that stretch reads AKHEQRKEPSK. Over residues 226-238 the composition is skewed to polar residues; sequence QTDSGNHVSQSEE. 2 C2H2-type zinc fingers span residues 275–297 and 303–326; these read FKCP…LRCH and YPCQ…RTIH. A Glycyl lysine isopeptide (Lys-Gly) (interchain with G-Cter in SUMO2) cross-link involves residue Lys-430.

It is found in the nucleus. Its function is as follows. May be involved in transcriptional regulation. The sequence is that of Zinc finger and BTB domain-containing protein 8A (Zbtb8a) from Mus musculus (Mouse).